Here is a 238-residue protein sequence, read N- to C-terminus: Leucine-rich repeat-containing protein 57 (238 aa).

8 LRR repeats span residues Leu10 to Leu36, Thr37 to His62, Lys64 to Lys82, Leu83 to Leu106, Ser108 to Thr128, Leu129 to Leu152, Ala154 to Arg173, and Thr174 to Asp199.

The protein is Leucine-rich repeat-containing protein 57 (lrrc57) of Danio rerio (Zebrafish).